The sequence spans 104 residues: L-rhamnose mutarotase (104 aa).

Y18 lines the substrate pocket. H22 acts as the Proton donor in catalysis. Residues Y41 and 76 to 77 contribute to the substrate site; that span reads WW.

Belongs to the rhamnose mutarotase family. In terms of assembly, homodimer.

Its subcellular location is the cytoplasm. The enzyme catalyses alpha-L-rhamnose = beta-L-rhamnose. The protein operates within carbohydrate metabolism; L-rhamnose metabolism. Functionally, involved in the anomeric conversion of L-rhamnose. The protein is L-rhamnose mutarotase of Burkholderia ambifaria (strain ATCC BAA-244 / DSM 16087 / CCUG 44356 / LMG 19182 / AMMD) (Burkholderia cepacia (strain AMMD)).